Here is a 157-residue protein sequence, read N- to C-terminus: Probable chemoreceptor glutamine deamidase CheD (157 aa).

Belongs to the CheD family.

The enzyme catalyses L-glutaminyl-[protein] + H2O = L-glutamyl-[protein] + NH4(+). Its function is as follows. Probably deamidates glutamine residues to glutamate on methyl-accepting chemotaxis receptors (MCPs), playing an important role in chemotaxis. This chain is Probable chemoreceptor glutamine deamidase CheD, found in Archaeoglobus fulgidus (strain ATCC 49558 / DSM 4304 / JCM 9628 / NBRC 100126 / VC-16).